The primary structure comprises 200 residues: Transcription elongation factor A protein-like 3 (200 aa).

Over residues 1–19 (MEEVRGENEGKLEKEGKPE) the composition is skewed to basic and acidic residues. The interval 1–200 (MEEVRGENEG…QRGLHDIPYL (200 aa)) is disordered. A compositionally biased stretch (acidic residues) spans 20-34 (DEVEPEDEEKSDEDE). S30 is modified (phosphoserine). 3 stretches are compositionally biased toward basic and acidic residues: residues 47 to 85 (GKPE…KPDS), 94 to 106 (RAAE…DYVP), and 114 to 153 (DRGT…EELR).

This sequence belongs to the TFS-II family. TFA subfamily.

Its subcellular location is the nucleus. May be involved in transcriptional regulation. The polypeptide is Transcription elongation factor A protein-like 3 (Tceal3) (Mus musculus (Mouse)).